Consider the following 289-residue polypeptide: Protease HtpX homolog (289 aa).

Transmembrane regions (helical) follow at residues 9–29 (TGVLMAFLTALLVGIGYLIGG) and 31–51 (GGMIIAFTIALFMNLISYWFS). His133 is a Zn(2+) binding site. Glu134 is an active-site residue. His137 provides a ligand contact to Zn(2+). 2 consecutive transmembrane segments (helical) span residues 143-163 (TLIQTLAAVLAGAIMILVDFA) and 182-202 (IGLILAIVLAPLAATLIQLAI). Position 207 (Glu207) interacts with Zn(2+).

It belongs to the peptidase M48B family. Requires Zn(2+) as cofactor.

It is found in the cell membrane. This is Protease HtpX homolog from Pyrococcus abyssi (strain GE5 / Orsay).